The following is a 297-amino-acid chain: Light-independent protochlorophyllide reductase iron-sulfur ATP-binding protein (297 aa).

ATP is bound by residues 41-46 and Lys-70; that span reads GIGKST. Ser-45 lines the Mg(2+) pocket. The [4Fe-4S] cluster site is built by Cys-126 and Cys-160. Residues 211-212 and 235-237 contribute to the ATP site; these read NR and PDL.

Belongs to the NifH/BchL/ChlL family. As to quaternary structure, homodimer. Protochlorophyllide reductase is composed of three subunits; BchL, BchN and BchB. Requires [4Fe-4S] cluster as cofactor.

The catalysed reaction is chlorophyllide a + oxidized 2[4Fe-4S]-[ferredoxin] + 2 ADP + 2 phosphate = protochlorophyllide a + reduced 2[4Fe-4S]-[ferredoxin] + 2 ATP + 2 H2O. The protein operates within porphyrin-containing compound metabolism; bacteriochlorophyll biosynthesis (light-independent). In terms of biological role, component of the dark-operative protochlorophyllide reductase (DPOR) that uses Mg-ATP and reduced ferredoxin to reduce ring D of protochlorophyllide (Pchlide) to form chlorophyllide a (Chlide). This reaction is light-independent. The L component serves as a unique electron donor to the NB-component of the complex, and binds Mg-ATP. The sequence is that of Light-independent protochlorophyllide reductase iron-sulfur ATP-binding protein from Methylorubrum extorquens (strain PA1) (Methylobacterium extorquens).